Consider the following 370-residue polypeptide: Chorismate synthase (370 aa).

Arg48 contacts NADP(+). Residues 125–127, 241–242, Gly286, 301–305, and Arg327 each bind FMN; these read RSS, NA, and KPTSS.

The protein belongs to the chorismate synthase family. As to quaternary structure, homotetramer. It depends on FMNH2 as a cofactor.

It catalyses the reaction 5-O-(1-carboxyvinyl)-3-phosphoshikimate = chorismate + phosphate. It functions in the pathway metabolic intermediate biosynthesis; chorismate biosynthesis; chorismate from D-erythrose 4-phosphate and phosphoenolpyruvate: step 7/7. Catalyzes the anti-1,4-elimination of the C-3 phosphate and the C-6 proR hydrogen from 5-enolpyruvylshikimate-3-phosphate (EPSP) to yield chorismate, which is the branch point compound that serves as the starting substrate for the three terminal pathways of aromatic amino acid biosynthesis. This reaction introduces a second double bond into the aromatic ring system. This Ruegeria sp. (strain TM1040) (Silicibacter sp.) protein is Chorismate synthase.